A 313-amino-acid chain; its full sequence is tRNA dimethylallyltransferase (313 aa).

10-17 contacts ATP; sequence GPTASGKT. 12 to 17 contributes to the substrate binding site; it reads TASGKT. 3 interaction with substrate tRNA regions span residues 35–38, 159–163, and 240–245; these read DSAM, QRIQR, and RCVGYR.

It belongs to the IPP transferase family. As to quaternary structure, monomer. Mg(2+) is required as a cofactor.

The catalysed reaction is adenosine(37) in tRNA + dimethylallyl diphosphate = N(6)-dimethylallyladenosine(37) in tRNA + diphosphate. In terms of biological role, catalyzes the transfer of a dimethylallyl group onto the adenine at position 37 in tRNAs that read codons beginning with uridine, leading to the formation of N6-(dimethylallyl)adenosine (i(6)A). This is tRNA dimethylallyltransferase from Legionella pneumophila (strain Corby).